The chain runs to 202 residues: Precorrin-2 dehydrogenase (202 aa).

NAD(+) contacts are provided by residues 20 to 21 and 41 to 42; these read TI and PT.

Belongs to the precorrin-2 dehydrogenase / sirohydrochlorin ferrochelatase family. Homodimer.

It carries out the reaction precorrin-2 + NAD(+) = sirohydrochlorin + NADH + 2 H(+). It participates in cofactor biosynthesis; adenosylcobalamin biosynthesis; sirohydrochlorin from precorrin-2: step 1/1. Its pathway is porphyrin-containing compound metabolism; siroheme biosynthesis; sirohydrochlorin from precorrin-2: step 1/1. Functionally, catalyzes the dehydrogenation of precorrin-2 to form sirohydrochlorin which is used as a precursor in both siroheme biosynthesis and in the anaerobic branch of adenosylcobalamin biosynthesis. It is unable to oxidize precorrin-3. The protein is Precorrin-2 dehydrogenase (sirC) of Priestia megaterium (Bacillus megaterium).